Reading from the N-terminus, the 913-residue chain is Sterol uptake control protein 2 (913 aa).

Residues 50–80 (GCDNCKRRRVKCDEGKPACRKCTNMKLECQY) constitute a DNA-binding region (zn(2)-C6 fungal-type). 2 disordered regions span residues 103–173 (GSVE…SMGL) and 216–258 (GNMG…LAGS). Thr-122 carries the post-translational modification Phosphothreonine. Over residues 150–164 (SESEEKSSAPIEDKN) the composition is skewed to basic and acidic residues. The segment covering 222 to 241 (QLQQQQQVQQQSQPQTQAQQ) has biased composition (low complexity). A coiled-coil region spans residues 303–346 (QQHQQVQLQQYQQLRQEQHQQVQQQQQEQLQQYQQHFLQQQQQV). 2 disordered regions span residues 347-385 (LLQQ…TLNS) and 453-489 (MQEH…GSAS). The segment covering 374-385 (LQSQTSETTLNS) has biased composition (polar residues). Positions 440-472 (ATKASNAEEALANMQEHHERAAASVKENDGQLS) form a coiled coil. Positions 454–468 (QEHHERAAASVKEND) are enriched in basic and acidic residues. Residues 469–487 (GQLSDTKSPAPSNNAQGGS) are compositionally biased toward polar residues. Ser-519 bears the Phosphoserine mark. Over residues 552-562 (EPTISLQTSQT) the composition is skewed to polar residues. Positions 552–571 (EPTISLQTSQTENEDDASRQ) are disordered.

The protein resides in the nucleus. Transcription factor that is involved in activation of anaerobic genes such as DAN/TIR cell wall mannoprotein genes and YML083c. Appears to bind to anaerobic response elements (AR1) with the consensus sequence 5'-TCGTTYAG-3' present in the promoter regions of DAN/TIR genes. Involved in sterol uptake and regulation of the sterol biosynthesis. Binds to sterol regulatory elements (SRE) with the consensus sequence 5'-TCGTATA-3' present in ERG2 and ERG3 promoters. May be involved in down-regulation of CWP2 during anaerobic adaptation. This Saccharomyces cerevisiae (strain ATCC 204508 / S288c) (Baker's yeast) protein is Sterol uptake control protein 2 (UPC2).